Reading from the N-terminus, the 336-residue chain is Phosphate acyltransferase (336 aa).

It belongs to the PlsX family. As to quaternary structure, homodimer. Probably interacts with PlsY.

It is found in the cytoplasm. It carries out the reaction a fatty acyl-[ACP] + phosphate = an acyl phosphate + holo-[ACP]. It participates in lipid metabolism; phospholipid metabolism. Catalyzes the reversible formation of acyl-phosphate (acyl-PO(4)) from acyl-[acyl-carrier-protein] (acyl-ACP). This enzyme utilizes acyl-ACP as fatty acyl donor, but not acyl-CoA. The polypeptide is Phosphate acyltransferase (Pseudomonas aeruginosa (strain UCBPP-PA14)).